Reading from the N-terminus, the 27-residue chain is Alpha-amylase/trypsin inhibitor CM17 (27 aa).

Belongs to the protease inhibitor I6 (cereal trypsin/alpha-amylase inhibitor) family. In terms of tissue distribution, developing endosperm.

Its subcellular location is the secreted. In terms of biological role, alpha-amylase/trypsin inhibitor. It could be involved in insect defense mechanisms. The chain is Alpha-amylase/trypsin inhibitor CM17 from Triticum aestivum (Wheat).